We begin with the raw amino-acid sequence, 1375 residues long: Ubiquitin carboxyl-terminal hydrolase 47 (1375 aa).

An N6-acetyllysine modification is found at Lys-122. Residues 188–564 (VGLVNQAMTC…NAYMLIYRLK (377 aa)) enclose the USP domain. Cys-197 acts as the Nucleophile in catalysis. The segment at 425–452 (DEKSPQTESCTDSGAENEGSCHSDQMSN) is disordered. Residues 430 to 452 (QTESCTDSGAENEGSCHSDQMSN) are compositionally biased toward polar residues. Residue His-503 is the Proton acceptor of the active site. Ser-832 carries the phosphoserine modification. 3 disordered regions span residues 840 to 859 (TAYQKAGGDSGNVDDDCERV), 880 to 968 (LKSL…SHSS), and 983 to 1024 (NGLD…ESGK). Residues 882–899 (SLSLQQQQDGDNGDSSKS) are compositionally biased toward low complexity. Ser-910 carries the post-translational modification Phosphoserine. A compositionally biased stretch (basic and acidic residues) spans 912–928 (LNERDSSASVDNRELEQ). The span at 929–938 (HIQTSDPENF) shows a compositional bias: polar residues. Ser-933 bears the Phosphoserine mark. Residues 940-950 (SEERSDSDVNN) are compositionally biased toward basic and acidic residues. The segment covering 953-968 (STSSVDSDILSSSHSS) has biased composition (low complexity). Residues 997–1006 (KANEGKKETW) are compositionally biased toward basic and acidic residues. The span at 1007 to 1020 (DTAEEDSGTDSEYD) shows a compositional bias: acidic residues. The residue at position 1013 (Ser-1013) is a Phosphoserine. The residue at position 1015 (Thr-1015) is a Phosphothreonine. Ser-1017 bears the Phosphoserine mark.

Belongs to the peptidase C19 family. Interacts with BTRC and FBXW11. Interacts with POLB. Expressed in skeletal muscle, heart and testis.

It localises to the cytoplasm. It catalyses the reaction Thiol-dependent hydrolysis of ester, thioester, amide, peptide and isopeptide bonds formed by the C-terminal Gly of ubiquitin (a 76-residue protein attached to proteins as an intracellular targeting signal).. In terms of biological role, ubiquitin-specific protease that specifically deubiquitinates monoubiquitinated DNA polymerase beta (POLB), stabilizing POLB thereby playing a role in base-excision repair (BER). Acts as a regulator of cell growth and genome integrity. May also indirectly regulate CDC25A expression at a transcriptional level. This chain is Ubiquitin carboxyl-terminal hydrolase 47 (USP47), found in Homo sapiens (Human).